The following is a 585-amino-acid chain: GRR1-like protein 1 (585 aa).

Residues 1–48 (MGLRFPPKVLEHILSFIDSNEDRNSVSLVCKSWFETERKTRKRVFVGN) enclose the F-box domain. A 1D-myo-inositol hexakisphosphate-binding site is contributed by Lys-70. The tract at residues 77–78 (DY) is interaction with auxin-responsive proteins. 1D-myo-inositol hexakisphosphate is bound by residues 109–110 (KR) and Arg-340. Positions 343–348 (PSEPDL) are interaction with auxin-responsive proteins. 397-399 (CFR) contributes to the 1D-myo-inositol hexakisphosphate binding site. The tract at residues 401–405 (CVIEP) is interaction with auxin-responsive proteins. 1D-myo-inositol hexakisphosphate is bound at residue Arg-432. The interaction with auxin-responsive proteins stretch occupies residues 460–461 (AF). Residues 480 to 481 (KK) and Arg-505 contribute to the 1D-myo-inositol hexakisphosphate site.

As to quaternary structure, part of a SCF (SKP1-cullin-F-box) protein ligase complex. Interacts with CUL1, SKP1A/ASK1 and SKP1B/ASK2. Interacts with Aux/IAA proteins (IAA7 and IAA12) in an auxin-dependent manner. In terms of tissue distribution, ubiquitous.

The protein localises to the nucleus. The protein operates within protein modification; protein ubiquitination. Its function is as follows. Component of SCF(ASK-cullin-F-box) E3 ubiquitin ligase complexes, which may mediate the ubiquitination and subsequent proteasomal degradation of target proteins. Auxin receptor that mediates Aux/IAA proteins proteasomal degradation and auxin-regulated transcription. Involved in embryogenesis regulation by auxin. Confers sensitivity to the virulent bacterial pathogen P.syringae. Mediates glucose repression in yeast. This Arabidopsis thaliana (Mouse-ear cress) protein is GRR1-like protein 1 (GRH1).